Here is a 217-residue protein sequence, read N- to C-terminus: tRNA (guanine-N(7)-)-methyltransferase (217 aa).

Residues E44, D69, D96, and D118 each contribute to the S-adenosyl-L-methionine site. The active site involves D118. K122 contacts substrate. Positions 124–129 (RHEKRR) are interaction with RNA. Residues D154 and 193–196 (TEYE) each bind substrate.

This sequence belongs to the class I-like SAM-binding methyltransferase superfamily. TrmB family.

It catalyses the reaction guanosine(46) in tRNA + S-adenosyl-L-methionine = N(7)-methylguanosine(46) in tRNA + S-adenosyl-L-homocysteine. It participates in tRNA modification; N(7)-methylguanine-tRNA biosynthesis. In terms of biological role, catalyzes the formation of N(7)-methylguanine at position 46 (m7G46) in tRNA. In Lactococcus lactis subsp. cremoris (strain SK11), this protein is tRNA (guanine-N(7)-)-methyltransferase.